Consider the following 33-residue polypeptide: MPRRRRSSRRPVRRRRRPRVSRRRRRRGGRRRR.

Residues 1 to 33 (MPRRRRSSRRPVRRRRRPRVSRRRRRRGGRRRR) are disordered.

As to expression, testis.

Its subcellular location is the nucleus. It localises to the chromosome. Functionally, protamines substitute for histones in the chromatin of sperm during the haploid phase of spermatogenesis. They compact sperm DNA into a highly condensed, stable and inactive complex. The protein is Protamine-2C of Oncorhynchus mykiss (Rainbow trout).